The following is a 288-amino-acid chain: MEGSMALSKWHAYSRLMRIDRPIGSLLLLWPTYWALWIAAQSIPSLHILIVFTAGVFLMRAAGCVINDFADRHFDGHVERTKHRPLPSGDVTEKEAKILFASLVGLSFLLVLTLNSMTIWLSVAGLALAWIYPFVKRVSHLLQVVLGAAFGWSIPMGFSAVSESLPLVCWVLFLVNILWSVIYDTQYAMVDRNDDLKIGVKSTAILFGQYDKLIIGILQIVMIVLLVLVGSLADLGAVYYIALSLSALLFIYQQKLMVDRERAPCFKAFLNNNYVGLILFIGIFLSYL.

7 helical membrane-spanning segments follow: residues 38-58 (IAAQ…GVFL), 98-120 (ILFA…MTIW), 141-161 (LLQV…FSAV), 163-183 (ESLP…SVIY), 213-233 (LIIG…GSLA), 238-258 (VYYI…KLMV), and 268-288 (AFLN…LSYL).

Belongs to the UbiA prenyltransferase family. Requires Mg(2+) as cofactor.

It localises to the cell inner membrane. It catalyses the reaction all-trans-octaprenyl diphosphate + 4-hydroxybenzoate = 4-hydroxy-3-(all-trans-octaprenyl)benzoate + diphosphate. The protein operates within cofactor biosynthesis; ubiquinone biosynthesis. Its function is as follows. Catalyzes the prenylation of para-hydroxybenzoate (PHB) with an all-trans polyprenyl group. Mediates the second step in the final reaction sequence of ubiquinone-8 (UQ-8) biosynthesis, which is the condensation of the polyisoprenoid side chain with PHB, generating the first membrane-bound Q intermediate 3-octaprenyl-4-hydroxybenzoate. The chain is 4-hydroxybenzoate octaprenyltransferase from Providencia stuartii.